Here is a 287-residue protein sequence, read N- to C-terminus: Ribosomal RNA small subunit methyltransferase A (287 aa).

S-adenosyl-L-methionine contacts are provided by N18, L20, G45, E66, D91, and N118.

It belongs to the class I-like SAM-binding methyltransferase superfamily. rRNA adenine N(6)-methyltransferase family. RsmA subfamily.

It localises to the cytoplasm. It carries out the reaction adenosine(1518)/adenosine(1519) in 16S rRNA + 4 S-adenosyl-L-methionine = N(6)-dimethyladenosine(1518)/N(6)-dimethyladenosine(1519) in 16S rRNA + 4 S-adenosyl-L-homocysteine + 4 H(+). Specifically dimethylates two adjacent adenosines (A1518 and A1519) in the loop of a conserved hairpin near the 3'-end of 16S rRNA in the 30S particle. May play a critical role in biogenesis of 30S subunits. This is Ribosomal RNA small subunit methyltransferase A from Haemophilus influenzae (strain ATCC 51907 / DSM 11121 / KW20 / Rd).